Reading from the N-terminus, the 274-residue chain is Homeobox-leucine zipper protein HAT9 (274 aa).

Positions 64-74 (SSHSGVSSFSS) are enriched in low complexity. The segment at 64 to 96 (SSHSGVSSFSSGRVVKRERDGGEESPEEEEMTE) is disordered. The segment at residues 110 to 169 (SARKKLRLTKQQSALLEESFKDHSTLNPKQKQVLARQLNLRPRQVEVWFQNRRARTKLKQ) is a DNA-binding region (homeobox). The interval 177–198 (LKKCCETLADENIRLQKEIQEL) is leucine-zipper.

Belongs to the HD-ZIP homeobox family. Class II subfamily.

The protein localises to the nucleus. In terms of biological role, probable transcription factor. The protein is Homeobox-leucine zipper protein HAT9 (HAT9) of Arabidopsis thaliana (Mouse-ear cress).